The following is a 290-amino-acid chain: Elongation factor Ts (290 aa).

Positions 81-84 (TDFV) are involved in Mg(2+) ion dislocation from EF-Tu.

It belongs to the EF-Ts family.

It localises to the cytoplasm. Functionally, associates with the EF-Tu.GDP complex and induces the exchange of GDP to GTP. It remains bound to the aminoacyl-tRNA.EF-Tu.GTP complex up to the GTP hydrolysis stage on the ribosome. The protein is Elongation factor Ts of Vesicomyosocius okutanii subsp. Calyptogena okutanii (strain HA).